The primary structure comprises 350 residues: Putative ankyrin repeat protein RBE_0589 (350 aa).

ANK repeat units lie at residues 81-110 (DGFT…NPNI), 114-151 (DIVT…EPTD), and 153-182 (SGWT…NLDI).

The protein is Putative ankyrin repeat protein RBE_0589 of Rickettsia bellii (strain RML369-C).